A 326-amino-acid chain; its full sequence is GMP reductase (326 aa).

Catalysis depends on Cys175, which acts as the Thioimidate intermediate. 204 to 227 is an NADP(+) binding site; that stretch reads IIADGGIRTHGDIAKSVRFGATMV.

This sequence belongs to the IMPDH/GMPR family. GuaC type 2 subfamily.

The enzyme catalyses IMP + NH4(+) + NADP(+) = GMP + NADPH + 2 H(+). Its function is as follows. Catalyzes the irreversible NADPH-dependent deamination of GMP to IMP. It functions in the conversion of nucleobase, nucleoside and nucleotide derivatives of G to A nucleotides, and in maintaining the intracellular balance of A and G nucleotides. This chain is GMP reductase, found in Bacillus licheniformis (strain ATCC 14580 / DSM 13 / JCM 2505 / CCUG 7422 / NBRC 12200 / NCIMB 9375 / NCTC 10341 / NRRL NRS-1264 / Gibson 46).